Here is a 336-residue protein sequence, read N- to C-terminus: Foldase protein PrsA (336 aa).

The N-terminal stretch at 1-22 (MKSAKKLLSVLCLGIFILTFTA) is a signal peptide. C23 carries the N-palmitoyl cysteine lipid modification. C23 carries the S-diacylglycerol cysteine lipid modification. The region spanning 194 to 286 (PNTMNVSHIL…WGYHIIKINS (93 aa)) is the PpiC domain.

This sequence belongs to the PrsA family.

The protein localises to the cell membrane. The catalysed reaction is [protein]-peptidylproline (omega=180) = [protein]-peptidylproline (omega=0). Plays a major role in protein secretion by helping the post-translocational extracellular folding of several secreted proteins. This Clostridium botulinum (strain Langeland / NCTC 10281 / Type F) protein is Foldase protein PrsA.